Here is a 303-residue protein sequence, read N- to C-terminus: Deoxyhypusine hydroxylase (303 aa).

2 HEAT-like PBS-type repeats span residues 56–82 (LKHE…VLQD) and 89–115 (VRHE…YAQD). Residues His-58, His-91, and Glu-92 each contribute to the Fe cation site. A disordered region spans residues 139–158 (DSPDTNPYLSVDPAPPAEEK). HEAT-like PBS-type repeat units lie at residues 176–202 (HRYR…GLQI), 207–233 (FRHE…ALER), and 240–266 (VRHE…HVGD). The Fe cation site is built by His-209, His-242, and Glu-243.

The protein belongs to the deoxyhypusine hydroxylase family. Fe(2+) serves as cofactor.

The enzyme catalyses [eIF5A protein]-deoxyhypusine + AH2 + O2 = [eIF5A protein]-hypusine + A + H2O. The protein operates within protein modification; eIF5A hypusination. Its function is as follows. Catalyzes the hydroxylation of the N(6)-(4-aminobutyl)-L-lysine intermediate produced by deoxyhypusine synthase/DHPS on a critical lysine of the eukaryotic translation initiation factor 5A/eIF-5A. This is the second step of the post-translational modification of that lysine into an unusual amino acid residue named hypusine. Hypusination is unique to mature eIF-5A factor and is essential for its function. This chain is Deoxyhypusine hydroxylase (dohh), found in Xenopus laevis (African clawed frog).